A 309-amino-acid chain; its full sequence is Tagatose-6-phosphate kinase (309 aa).

It belongs to the carbohydrate kinase PfkB family. LacC subfamily.

The catalysed reaction is D-tagatofuranose 6-phosphate + ATP = D-tagatofuranose 1,6-bisphosphate + ADP + H(+). The protein operates within carbohydrate metabolism; D-tagatose 6-phosphate degradation; D-glyceraldehyde 3-phosphate and glycerone phosphate from D-tagatose 6-phosphate: step 1/2. The chain is Tagatose-6-phosphate kinase from Streptococcus pyogenes serotype M18 (strain MGAS8232).